A 476-amino-acid polypeptide reads, in one-letter code: Adenosylhomocysteinase (476 aa).

3 residues coordinate substrate: Thr-65, Asp-140, and Glu-201. 202–204 (TTT) is an NAD(+) binding site. Substrate contacts are provided by Lys-231 and Asp-235. NAD(+) is bound by residues Asn-236, 265-270 (GYGDVG), Glu-288, Asn-323, 344-346 (IGH), and Asn-392.

This sequence belongs to the adenosylhomocysteinase family. The cofactor is NAD(+).

It localises to the cytoplasm. It carries out the reaction S-adenosyl-L-homocysteine + H2O = L-homocysteine + adenosine. The protein operates within amino-acid biosynthesis; L-homocysteine biosynthesis; L-homocysteine from S-adenosyl-L-homocysteine: step 1/1. In terms of biological role, may play a key role in the regulation of the intracellular concentration of adenosylhomocysteine. The chain is Adenosylhomocysteinase from Bacteroides thetaiotaomicron (strain ATCC 29148 / DSM 2079 / JCM 5827 / CCUG 10774 / NCTC 10582 / VPI-5482 / E50).